The sequence spans 386 residues: Heat-inducible transcription repressor HrcA (386 aa).

This sequence belongs to the HrcA family.

Negative regulator of class I heat shock genes (grpE-dnaK-dnaJ and groELS operons). Prevents heat-shock induction of these operons. In Chlamydia felis (strain Fe/C-56) (Chlamydophila felis), this protein is Heat-inducible transcription repressor HrcA.